The following is a 279-amino-acid chain: Ribosomal RNA small subunit methyltransferase I (279 aa).

Belongs to the methyltransferase superfamily. RsmI family.

The protein resides in the cytoplasm. It catalyses the reaction cytidine(1402) in 16S rRNA + S-adenosyl-L-methionine = 2'-O-methylcytidine(1402) in 16S rRNA + S-adenosyl-L-homocysteine + H(+). In terms of biological role, catalyzes the 2'-O-methylation of the ribose of cytidine 1402 (C1402) in 16S rRNA. This Synechocystis sp. (strain ATCC 27184 / PCC 6803 / Kazusa) protein is Ribosomal RNA small subunit methyltransferase I.